The following is a 226-amino-acid chain: MHLLIAAAGSGRRMGADRNKLLLPLLGRPLIAWTVDAALTATEISWIGIVGQDIDRAEILDALGSVKKPLVWIQGGATRQESVLRGLAGLPEGARHVLIHDGARCLVQPDLFDRCAVAVEAGAALIAATPVTDTIKRVDEHGMIRDTPDRAELWAAQTPQGFEVEQLRQGHVRAQAEGWSVTDDASLFERLGWSVQVLDAGPSNIKVTTPFDLTVAEAVLSSRTTP.

This sequence belongs to the IspD/TarI cytidylyltransferase family. IspD subfamily.

It carries out the reaction 2-C-methyl-D-erythritol 4-phosphate + CTP + H(+) = 4-CDP-2-C-methyl-D-erythritol + diphosphate. The protein operates within isoprenoid biosynthesis; isopentenyl diphosphate biosynthesis via DXP pathway; isopentenyl diphosphate from 1-deoxy-D-xylulose 5-phosphate: step 2/6. In terms of biological role, catalyzes the formation of 4-diphosphocytidyl-2-C-methyl-D-erythritol from CTP and 2-C-methyl-D-erythritol 4-phosphate (MEP). The protein is 2-C-methyl-D-erythritol 4-phosphate cytidylyltransferase of Synechococcus sp. (strain CC9902).